The following is a 1393-amino-acid chain: DNA-directed RNA polymerase subunit beta'' (1393 aa).

Residues cysteine 220, cysteine 291, cysteine 298, and cysteine 301 each contribute to the Zn(2+) site.

The protein belongs to the RNA polymerase beta' chain family. RpoC2 subfamily. As to quaternary structure, in plastids the minimal PEP RNA polymerase catalytic core is composed of four subunits: alpha, beta, beta', and beta''. When a (nuclear-encoded) sigma factor is associated with the core the holoenzyme is formed, which can initiate transcription. Requires Zn(2+) as cofactor.

The protein localises to the plastid. The protein resides in the chloroplast. The catalysed reaction is RNA(n) + a ribonucleoside 5'-triphosphate = RNA(n+1) + diphosphate. DNA-dependent RNA polymerase catalyzes the transcription of DNA into RNA using the four ribonucleoside triphosphates as substrates. The chain is DNA-directed RNA polymerase subunit beta'' from Gossypium hirsutum (Upland cotton).